We begin with the raw amino-acid sequence, 327 residues long: DNA-directed RNA polymerase subunit alpha (327 aa).

The segment at 1–233 is alpha N-terminal domain (alpha-NTD); it reads MVREKVKVST…NLFIPFLHVE (233 aa). An alpha C-terminal domain (alpha-CTD) region spans residues 267-327; the sequence is LAFQYIFIDQ…KKILDILEKK (61 aa).

This sequence belongs to the RNA polymerase alpha chain family. In plastids the minimal PEP RNA polymerase catalytic core is composed of four subunits: alpha, beta, beta', and beta''. When a (nuclear-encoded) sigma factor is associated with the core the holoenzyme is formed, which can initiate transcription.

The protein localises to the plastid. It localises to the chloroplast. The catalysed reaction is RNA(n) + a ribonucleoside 5'-triphosphate = RNA(n+1) + diphosphate. Functionally, DNA-dependent RNA polymerase catalyzes the transcription of DNA into RNA using the four ribonucleoside triphosphates as substrates. This is DNA-directed RNA polymerase subunit alpha from Draba nemorosa (Woodland whitlowgrass).